The sequence spans 180 residues: Cancer/testis antigen 1 (180 aa).

Gly residues-rich tracts occupy residues methionine 1–glycine 47 and glycine 55–glycine 66. A disordered region spans residues methionine 1 to glycine 66.

It belongs to the CTAG/PCC1 family. Expressed in testis and ovary and in a wide variety of cancers. Detected in uterine myometrium. Expressed from 18 weeks until birth in human fetal testis. In the adult testis, is strongly expressed in spermatogonia and in primary spermatocytes, but not in post-meiotic cells or in testicular somatic cells (at protein level).

It localises to the cytoplasm. This Homo sapiens (Human) protein is Cancer/testis antigen 1 (CTAG1A).